A 324-amino-acid chain; its full sequence is Dolichyl-phosphate beta-glucosyltransferase (324 aa).

The Lumenal portion of the chain corresponds to 1-7 (MAPLLLQ). The chain crosses the membrane as a helical; Signal-anchor for type II membrane protein span at residues 8–28 (LAVLGAALAAAALVLISIVAF). Residues 29-324 (TTATKMPALH…WRLEQTRKMN (296 aa)) are Cytoplasmic-facing.

Belongs to the glycosyltransferase 2 family. As to expression, expressed in pancreas, placenta, liver, heart, brain, kidney, skeletal muscle, and lung.

The protein resides in the endoplasmic reticulum membrane. It carries out the reaction a di-trans,poly-cis-dolichyl phosphate + UDP-alpha-D-glucose = a di-trans,poly-cis-dolichyl beta-D-glucosyl phosphate + UDP. It functions in the pathway protein modification; protein glycosylation. In terms of biological role, dolichyl-phosphate beta-glucosyltransferase that operates in the biosynthetic pathway of dolichol-linked oligosaccharides, the glycan precursors employed in protein asparagine (N)-glycosylation. The assembly of dolichol-linked oligosaccharides begins on the cytosolic side of the endoplasmic reticulum membrane and finishes in its lumen. The sequential addition of sugars to dolichol pyrophosphate produces dolichol-linked oligosaccharides containing fourteen sugars, including two GlcNAcs, nine mannoses and three glucoses. Once assembled, the oligosaccharide is transferred from the lipid to nascent proteins by oligosaccharyltransferases. Dolichyl-phosphate beta-glucosyltransferase produces dolichyl beta-D-glucosyl phosphate/Dol-P-Glc, the glucose donor substrate used sequentially by ALG6, ALG8 and ALG10 to add glucose residues on top of the Man(9)GlcNAc(2)-PP-Dol structure. These are the three last steps in the biosynthetic pathway of dolichol-linked oligosaccharides to produce Glc(3)Man(9)GlcNAc(2)-PP-Dol. The enzyme is most probably active on the cytoplasmic side of the endoplasmic reticulum while its product Dol-P-Glc is the substrate for ALG6, ALG8 and ALG11 in the lumen of the endoplasmic reticulum. This Homo sapiens (Human) protein is Dolichyl-phosphate beta-glucosyltransferase.